The sequence spans 218 residues: DNA-directed RNA polymerase III subunit RPC7-like (218 aa).

Residues 130 to 218 are disordered; the sequence is TIILPKRPPK…SDDNMDEAIY (89 aa). Basic and acidic residues predominate over residues 139–160; sequence KSTDDKEETIQKLETLEKKEEE. Acidic residues-rich tracts occupy residues 161–193 and 201–218; these read VTSE…EETD and NGED…EAIY.

It belongs to the eukaryotic RPC7 RNA polymerase subunit family. As to quaternary structure, component of the RNA polymerase III (Pol III) complex consisting of 17 subunits. Pol III exists as two alternative complexes defined by the mutually exclusive incorporation of subunit POLR3G/RPC7alpha or POLR3GL/RPC7beta. Found in a trimeric complex with POLR3C/RPC3 and POLR3F/RPC6. Directly interacts with POLR3C. Expressed in the liver.

Its subcellular location is the nucleus. DNA-dependent RNA polymerase catalyzes the transcription of DNA into RNA using the four ribonucleoside triphosphates as substrates. Specific peripheric component of RNA polymerase III which synthesizes small RNAs, such as 5S rRNA and tRNAs. The protein is DNA-directed RNA polymerase III subunit RPC7-like of Mus musculus (Mouse).